We begin with the raw amino-acid sequence, 273 residues long: Shikimate dehydrogenase (NADP(+)) (273 aa).

Shikimate contacts are provided by residues 14–16 (SKS) and threonine 61. Lysine 65 acts as the Proton acceptor in catalysis. Glutamate 77 lines the NADP(+) pocket. 2 residues coordinate shikimate: asparagine 86 and aspartate 102. Residues 126–130 (GAGGA), 150–155 (NRTLSK), and methionine 214 contribute to the NADP(+) site. Tyrosine 216 is a binding site for shikimate. Glycine 238 is a binding site for NADP(+).

It belongs to the shikimate dehydrogenase family. In terms of assembly, homodimer.

The enzyme catalyses shikimate + NADP(+) = 3-dehydroshikimate + NADPH + H(+). The protein operates within metabolic intermediate biosynthesis; chorismate biosynthesis; chorismate from D-erythrose 4-phosphate and phosphoenolpyruvate: step 4/7. Its function is as follows. Involved in the biosynthesis of the chorismate, which leads to the biosynthesis of aromatic amino acids. Catalyzes the reversible NADPH linked reduction of 3-dehydroshikimate (DHSA) to yield shikimate (SA). This chain is Shikimate dehydrogenase (NADP(+)), found in Photobacterium profundum (strain SS9).